A 141-amino-acid chain; its full sequence is Nucleoside triphosphatase NudI (141 aa).

The Nudix hydrolase domain maps to 1 to 141 (MRQRTIVCPL…RHTLALKGLL (141 aa)). A Nudix box motif is present at residues 38–59 (GGVEPGERIEEALRREVREELG).

The protein belongs to the Nudix hydrolase family. NudI subfamily. As to quaternary structure, monomer. Mg(2+) serves as cofactor.

The enzyme catalyses a ribonucleoside 5'-triphosphate + H2O = a ribonucleoside 5'-phosphate + diphosphate + H(+). The catalysed reaction is a 2'-deoxyribonucleoside 5'-triphosphate + H2O = a 2'-deoxyribonucleoside 5'-phosphate + diphosphate + H(+). It catalyses the reaction dUTP + H2O = dUMP + diphosphate + H(+). It carries out the reaction dTTP + H2O = dTMP + diphosphate + H(+). The enzyme catalyses dCTP + H2O = dCMP + diphosphate + H(+). Functionally, catalyzes the hydrolysis of nucleoside triphosphates, with a preference for pyrimidine deoxynucleoside triphosphates (dUTP, dTTP and dCTP). The sequence is that of Nucleoside triphosphatase NudI from Salmonella agona (strain SL483).